We begin with the raw amino-acid sequence, 497 residues long: RNA polymerase sigma factor SigA (497 aa).

Disordered stretches follow at residues 1–20 (MSTD…PELS) and 62–86 (KTLH…HAPL). Basic and acidic residues predominate over residues 63-73 (TLHENKESDVP). The span at 74 to 84 (KKRRGRKPKHA) shows a compositional bias: basic residues. The tract at residues 250 to 320 (LVTSNLRLVV…TRAIADQART (71 aa)) is sigma-70 factor domain-2. The Interaction with polymerase core subunit RpoC motif lies at 274 to 277 (DLIQ). The tract at residues 329–410 (ETINRLAKAE…DTDAQTPDEF (82 aa)) is sigma-70 factor domain-3. The sigma-70 factor domain-4 stretch occupies residues 423 to 478 (LLNNNLSEQEELIVRMRIGMPPYNEPKTLDEVGQKILIPREKIRQIENKAIRKLRH). Positions 451-470 (LDEVGQKILIPREKIRQIEN) form a DNA-binding region, H-T-H motif.

The protein belongs to the sigma-70 factor family. RpoD/SigA subfamily. Interacts transiently with the RNA polymerase catalytic core.

The protein resides in the cytoplasm. Functionally, sigma factors are initiation factors that promote the attachment of RNA polymerase to specific initiation sites and are then released. This sigma factor is the primary sigma factor during exponential growth. In Mycoplasma genitalium (strain ATCC 33530 / DSM 19775 / NCTC 10195 / G37) (Mycoplasmoides genitalium), this protein is RNA polymerase sigma factor SigA.